The primary structure comprises 467 residues: DNA repair protein RadA (467 aa).

The segment at 10 to 27 (CQNCGAVHSRWAGKCDSC) adopts a C4-type zinc-finger fold. Residue 98 to 105 (GDPGIGKS) coordinates ATP. Positions 260–264 (KNRFG) match the RadA KNRFG motif motif. The segment at 359 to 467 (DVYLNVAGGY…RIAASGAGKK (109 aa)) is lon-protease-like.

This sequence belongs to the RecA family. RadA subfamily.

Its function is as follows. DNA-dependent ATPase involved in processing of recombination intermediates, plays a role in repairing DNA breaks. Stimulates the branch migration of RecA-mediated strand transfer reactions, allowing the 3' invading strand to extend heteroduplex DNA faster. Binds ssDNA in the presence of ADP but not other nucleotides, has ATPase activity that is stimulated by ssDNA and various branched DNA structures, but inhibited by SSB. Does not have RecA's homology-searching function. In Brucella abortus (strain 2308), this protein is DNA repair protein RadA.